Here is a 110-residue protein sequence, read N- to C-terminus: Nucleoid-associated protein KPK_4227 (110 aa).

Residues 1 to 22 (MFGGKGGLGNLMKQAQQMQDKM) form a disordered region.

This sequence belongs to the YbaB/EbfC family. As to quaternary structure, homodimer.

The protein resides in the cytoplasm. It localises to the nucleoid. Binds to DNA and alters its conformation. May be involved in regulation of gene expression, nucleoid organization and DNA protection. This chain is Nucleoid-associated protein KPK_4227, found in Klebsiella pneumoniae (strain 342).